A 150-amino-acid chain; its full sequence is Large ribosomal subunit protein bL9 (150 aa).

It belongs to the bacterial ribosomal protein bL9 family.

Binds to the 23S rRNA. This Corynebacterium jeikeium (strain K411) protein is Large ribosomal subunit protein bL9.